The following is a 350-amino-acid chain: Zinc finger protein 367 (350 aa).

The segment at serine 104 to aspartate 151 is disordered. The span at glycine 137–aspartate 151 shows a compositional bias: basic and acidic residues. 2 C2H2-type zinc fingers span residues isoleucine 167 to histidine 189 and tyrosine 195 to histidine 219. Residues lysine 290 to glutamine 327 are disordered. Positions leucine 308 to asparagine 342 form a coiled coil. At serine 310 the chain carries Phosphoserine. Positions glutamate 316–glutamine 327 are enriched in basic and acidic residues.

Belongs to the krueppel C2H2-type zinc-finger protein family.

The protein localises to the nucleus. In terms of biological role, transcriptional activator. Isoform 1 may be involved in transcriptional activation of erythroid genes. In Homo sapiens (Human), this protein is Zinc finger protein 367 (ZNF367).